The following is a 371-amino-acid chain: Mannose-1-phosphate guanylyltransferase catalytic subunit beta (371 aa).

The tract at residues 14–233 (RALILVGGYG…TGFWMDIGQP (220 aa)) is substrate-binding domain. Asp-122 contacts GDP-alpha-D-mannose. A Mg(2+)-binding site is contributed by Asp-122. Lys-173 is a catalytic residue. Residue Asp-229 participates in GDP-alpha-D-mannose binding. Residue Asp-229 participates in Mg(2+) binding. Residues 256 to 371 (YTGPGVVGNV…ASVPEPQIIM (116 aa)) are hexapeptide repeat domain.

This sequence belongs to the transferase hexapeptide repeat family. Component of the GMPPA-GMPPB mannose-1-phosphate guanylyltransferase complex composed of 4 Gmppa subunits and 8 Gmppb subunits; the complex is organized into three layers, a central layer made up of 2 Gmppa dimers sandwiched between two layers each made up of 2 Gmppb dimers. Gmppb catalytic activity is reduced when part of the complex and binding of GDP-alpha-D-Mannose by Gmppa induces allosteric feedback inhibition of Gmppb. The cofactor is Mg(2+).

It catalyses the reaction alpha-D-mannose 1-phosphate + GTP + H(+) = GDP-alpha-D-mannose + diphosphate. The protein operates within nucleotide-sugar biosynthesis; GDP-alpha-D-mannose biosynthesis; GDP-alpha-D-mannose from alpha-D-mannose 1-phosphate (GTP route): step 1/1. With respect to regulation, enzyme activity is reduced by incorporation into the GMPPA-GMPPB mannose-1-phosphate guanylyltransferase complex. Allosterically inhibited, when part of the GMPPA-GMPPB complex, by GDP-alpha-D-mannose binding to Gmppa. Catalytic subunit of the GMPPA-GMPPB mannose-1-phosphate guanylyltransferase complex. Catalyzes the formation of GDP-mannose, an essential precursor of glycan moieties of glycoproteins and glycolipids. Can catalyze the reverse reaction in vitro. Together with GMPPA regulates GDP-alpha-D-mannose levels. This chain is Mannose-1-phosphate guanylyltransferase catalytic subunit beta, found in Drosophila pseudoobscura pseudoobscura (Fruit fly).